Here is a 304-residue protein sequence, read N- to C-terminus: Probable 5-dehydro-4-deoxyglucarate dehydratase (304 aa).

This sequence belongs to the DapA family.

It catalyses the reaction 5-dehydro-4-deoxy-D-glucarate + H(+) = 2,5-dioxopentanoate + CO2 + H2O. The protein operates within carbohydrate acid metabolism; D-glucarate degradation; 2,5-dioxopentanoate from D-glucarate: step 2/2. The protein is Probable 5-dehydro-4-deoxyglucarate dehydratase of Rhodococcus opacus (strain B4).